We begin with the raw amino-acid sequence, 91 residues long: Small ribosomal subunit protein uS15 (91 aa).

It belongs to the universal ribosomal protein uS15 family. Part of the 30S ribosomal subunit. Forms a bridge to the 50S subunit in the 70S ribosome, contacting the 23S rRNA.

Its function is as follows. One of the primary rRNA binding proteins, it binds directly to 16S rRNA where it helps nucleate assembly of the platform of the 30S subunit by binding and bridging several RNA helices of the 16S rRNA. Functionally, forms an intersubunit bridge (bridge B4) with the 23S rRNA of the 50S subunit in the ribosome. This chain is Small ribosomal subunit protein uS15, found in Legionella pneumophila (strain Paris).